Here is a 525-residue protein sequence, read N- to C-terminus: GMP synthase [glutamine-hydrolyzing] (525 aa).

The Glutamine amidotransferase type-1 domain maps to 8–207 (KILILDFGSQ…ALDICECEAN (200 aa)). The Nucleophile role is filled by C85. Active-site residues include H181 and E183. Positions 208 to 400 (WKPTSIIEDA…LGLPYDMLYR (193 aa)) constitute a GMPS ATP-PPase domain. ATP is bound at residue 235–241 (SGGVDSS).

Homodimer.

It carries out the reaction XMP + L-glutamine + ATP + H2O = GMP + L-glutamate + AMP + diphosphate + 2 H(+). It participates in purine metabolism; GMP biosynthesis; GMP from XMP (L-Gln route): step 1/1. Catalyzes the synthesis of GMP from XMP. The sequence is that of GMP synthase [glutamine-hydrolyzing] from Shewanella sediminis (strain HAW-EB3).